The sequence spans 173 residues: Alpha-crystallin A chain (173 aa).

Met-1 is modified (N-acetylmethionine). The tract at residues 1-63 (MDIAIQHPWF…RTVLDSGISE (63 aa)) is required for complex formation with BFSP1 and BFSP2. Gln-6 carries the post-translational modification Deamidated glutamine; partial. At Ser-45 the chain carries Phosphoserine. Gln-50 bears the Deamidated glutamine; partial mark. Residues 52-162 (LFRTVLDSGI…GHSERAIPVS (111 aa)) form the sHSP domain. Position 70 is an N6-acetyllysine (Lys-70). Gln-90 is modified (deamidated glutamine; partial). Lys-99 is subject to N6-acetyllysine. Residue His-100 participates in Zn(2+) binding. Asn-101 carries the deamidated asparagine; partial modification. Residues Glu-102 and His-107 each coordinate Zn(2+). Ser-122 bears the Phosphoserine mark. Asn-123 bears the Deamidated asparagine; partial mark. The interval 144–173 (PKIPSGVDAGHSERAIPVSREEKPSSAPSS) is disordered. Over residues 153–167 (GHSERAIPVSREEKP) the composition is skewed to basic and acidic residues. His-154 lines the Zn(2+) pocket. An O-linked (GlcNAc) serine glycan is attached at Ser-162.

It belongs to the small heat shock protein (HSP20) family. In terms of assembly, heteromer composed of three CRYAA and one CRYAB subunits. Inter-subunit bridging via zinc ions enhances stability, which is crucial as there is no protein turn over in the lens. Can also form homodimers and homotetramers (dimers of dimers) which serve as the building blocks of homooligomers. Within homooligomers, the zinc-binding motif is created from residues of 3 different molecules. His-100 and Glu-102 from one molecule are ligands of the zinc ion, and His-107 and His-154 residues from additional molecules complete the site with tetrahedral coordination geometry. Part of a complex required for lens intermediate filament formation composed of BFSP1, BFSP2 and CRYAA. Acetylation at Lys-70 may increase chaperone activity. Post-translationally, undergoes age-dependent proteolytical cleavage at the C-terminus.

It localises to the cytoplasm. The protein resides in the nucleus. Its function is as follows. Contributes to the transparency and refractive index of the lens. Acts as a chaperone, preventing aggregation of various proteins under a wide range of stress conditions. Required for the correct formation of lens intermediate filaments as part of a complex composed of BFSP1, BFSP2 and CRYAA. This is Alpha-crystallin A chain (CRYAA) from Giraffa camelopardalis (Giraffe).